The following is a 119-amino-acid chain: Large ribosomal subunit protein bL20 (119 aa).

It belongs to the bacterial ribosomal protein bL20 family.

In terms of biological role, binds directly to 23S ribosomal RNA and is necessary for the in vitro assembly process of the 50S ribosomal subunit. It is not involved in the protein synthesizing functions of that subunit. The protein is Large ribosomal subunit protein bL20 of Xylella fastidiosa (strain M23).